Reading from the N-terminus, the 130-residue chain is Large ribosomal subunit protein bL20 (130 aa).

This sequence belongs to the bacterial ribosomal protein bL20 family.

In terms of biological role, binds directly to 23S ribosomal RNA and is necessary for the in vitro assembly process of the 50S ribosomal subunit. It is not involved in the protein synthesizing functions of that subunit. The chain is Large ribosomal subunit protein bL20 from Solibacter usitatus (strain Ellin6076).